The primary structure comprises 416 residues: D-amino acid dehydrogenase 2 (416 aa).

Residue 5–19 (VCIIGAGVVGLATAY) coordinates FAD.

The protein belongs to the DadA oxidoreductase family. The cofactor is FAD.

The catalysed reaction is a D-alpha-amino acid + A + H2O = a 2-oxocarboxylate + AH2 + NH4(+). Functionally, oxidative deamination of D-amino acids. This is D-amino acid dehydrogenase 2 (dadA2) from Pseudomonas aeruginosa (strain ATCC 15692 / DSM 22644 / CIP 104116 / JCM 14847 / LMG 12228 / 1C / PRS 101 / PAO1).